The primary structure comprises 347 residues: Phosphoribosylformylglycinamidine cyclo-ligase (347 aa).

This sequence belongs to the AIR synthase family.

Its subcellular location is the cytoplasm. It carries out the reaction 2-formamido-N(1)-(5-O-phospho-beta-D-ribosyl)acetamidine + ATP = 5-amino-1-(5-phospho-beta-D-ribosyl)imidazole + ADP + phosphate + H(+). Its pathway is purine metabolism; IMP biosynthesis via de novo pathway; 5-amino-1-(5-phospho-D-ribosyl)imidazole from N(2)-formyl-N(1)-(5-phospho-D-ribosyl)glycinamide: step 2/2. This is Phosphoribosylformylglycinamidine cyclo-ligase from Dechloromonas aromatica (strain RCB).